Consider the following 362-residue polypeptide: 3-dehydroquinate synthase (362 aa).

Residues 70 to 75 (DGESYK), 104 to 108 (GVVGD), 128 to 129 (TT), Lys141, and Lys150 each bind NAD(+). Zn(2+) is bound by residues Glu183, His246, and His263.

It belongs to the sugar phosphate cyclases superfamily. Dehydroquinate synthase family. Co(2+) serves as cofactor. Zn(2+) is required as a cofactor. The cofactor is NAD(+).

The protein resides in the cytoplasm. The catalysed reaction is 7-phospho-2-dehydro-3-deoxy-D-arabino-heptonate = 3-dehydroquinate + phosphate. Its pathway is metabolic intermediate biosynthesis; chorismate biosynthesis; chorismate from D-erythrose 4-phosphate and phosphoenolpyruvate: step 2/7. Catalyzes the conversion of 3-deoxy-D-arabino-heptulosonate 7-phosphate (DAHP) to dehydroquinate (DHQ). This Saccharophagus degradans (strain 2-40 / ATCC 43961 / DSM 17024) protein is 3-dehydroquinate synthase.